The sequence spans 637 residues: Probable potassium transport system protein Kup 2 (637 aa).

A disordered region spans residues M1 to A21. A run of 12 helical transmembrane segments spans residues L29 to F49, V68 to V88, L116 to P136, V150 to F170, V180 to L200, A228 to V248, I258 to G278, A300 to I320, L359 to A379, A381 to M401, L409 to A429, and I434 to T454.

It belongs to the HAK/KUP transporter (TC 2.A.72) family.

The protein resides in the cell inner membrane. The catalysed reaction is K(+)(in) + H(+)(in) = K(+)(out) + H(+)(out). Functionally, transport of potassium into the cell. Likely operates as a K(+):H(+) symporter. The chain is Probable potassium transport system protein Kup 2 from Mesorhizobium japonicum (strain LMG 29417 / CECT 9101 / MAFF 303099) (Mesorhizobium loti (strain MAFF 303099)).